A 419-amino-acid chain; its full sequence is UDP-N-acetylglucosamine 1-carboxyvinyltransferase 2 (419 aa).

24-25 (KN) contributes to the phosphoenolpyruvate binding site. UDP-N-acetyl-alpha-D-glucosamine is bound at residue Arg-94. The active-site Proton donor is the Cys-118. Residue Cys-118 is modified to 2-(S-cysteinyl)pyruvic acid O-phosphothioketal. UDP-N-acetyl-alpha-D-glucosamine is bound by residues 123–127 (RPIDQ), Asp-307, and Ile-329.

It belongs to the EPSP synthase family. MurA subfamily.

It is found in the cytoplasm. The catalysed reaction is phosphoenolpyruvate + UDP-N-acetyl-alpha-D-glucosamine = UDP-N-acetyl-3-O-(1-carboxyvinyl)-alpha-D-glucosamine + phosphate. The protein operates within cell wall biogenesis; peptidoglycan biosynthesis. Its function is as follows. Cell wall formation. Adds enolpyruvyl to UDP-N-acetylglucosamine. This chain is UDP-N-acetylglucosamine 1-carboxyvinyltransferase 2, found in Staphylococcus epidermidis (strain ATCC 12228 / FDA PCI 1200).